The following is a 147-amino-acid chain: Ribonuclease 4 (147 aa).

The signal sequence occupies residues 1-28; the sequence is MDIQRTQSLLLLLLLTLLGLGLVQPSYG. Gln-29 carries the pyrrolidone carboxylic acid modification. Arg-35, His-40, Lys-68, Asn-71, and Thr-72 together coordinate dUMP. The active-site Proton acceptor is the His-40. 4 disulfides stabilise this stretch: Cys-53-Cys-109, Cys-67-Cys-120, Cys-85-Cys-135, and Cys-92-Cys-99. The active-site Proton donor is His-144. Position 145 (Phe-145) interacts with dUMP.

The protein belongs to the pancreatic ribonuclease family.

It localises to the secreted. Cleaves preferentially after uridine bases. Has antimicrobial activity against uropathogenic E.coli (UPEC). Probably contributes to urinary tract sterility. The polypeptide is Ribonuclease 4 (Rnase4) (Rattus norvegicus (Rat)).